A 144-amino-acid polypeptide reads, in one-letter code: Large ribosomal subunit protein uL16 (144 aa).

Positions 1 to 16 (MLIPKRVKYRKQHRPR) are enriched in basic residues. The interval 1-25 (MLIPKRVKYRKQHRPRGNGGVSKGG) is disordered.

The protein belongs to the universal ribosomal protein uL16 family. As to quaternary structure, part of the 50S ribosomal subunit.

In terms of biological role, binds 23S rRNA and is also seen to make contacts with the A and possibly P site tRNAs. The sequence is that of Large ribosomal subunit protein uL16 from Desulforamulus reducens (strain ATCC BAA-1160 / DSM 100696 / MI-1) (Desulfotomaculum reducens).